We begin with the raw amino-acid sequence, 423 residues long: Probable sodium/metabolite cotransporter BASS3, chloroplastic (423 aa).

The transit peptide at 1 to 45 (MAAAVAASSSSSSSSCAAVGVATASHPHRHRQARFVVSPPAPASP) directs the protein to the chloroplast. 9 consecutive transmembrane segments (helical) span residues 106-126 (ALLP…PATF), 138-158 (LGGI…ALAF), 165-187 (TIGY…RAFG), 192-214 (FFAG…ASFL), 231-251 (ISSV…VVPV), 254-274 (IAMA…GLLL), 287-307 (PVMP…PLAI), 318-338 (FLLL…GYWI), and 380-400 (VPAA…ASYW).

This sequence belongs to the bile acid:sodium symporter (BASS) (TC 2.A.28) family.

The protein resides in the membrane. Its subcellular location is the plastid. It localises to the chloroplast envelope. Functionally, may function as sodium-coupled metabolite transporter across the chloroplast envelope. This Oryza sativa subsp. japonica (Rice) protein is Probable sodium/metabolite cotransporter BASS3, chloroplastic (BASS3).